Consider the following 407-residue polypeptide: Indoleamine 2,3-dioxygenase 2 (407 aa).

Histidine 347 contributes to the heme binding site.

This sequence belongs to the indoleamine 2,3-dioxygenase family. The cofactor is heme. As to expression, detected in liver, small intestine, spleen, placenta, thymus, lung, brain, kidney, and colon. Also expressed at low level in testis and thyroid. Not expressed in the majority of human tumor samples (&gt;99%).

It catalyses the reaction L-tryptophan + O2 = N-formyl-L-kynurenine. It participates in amino-acid degradation; L-tryptophan degradation via kynurenine pathway; L-kynurenine from L-tryptophan: step 1/2. With respect to regulation, activity is inhibited by D-1MT (1-methyl-D-tryptophan) and MTH-trp (methylthiohydantoin-DL-tryptophan) but not L-1MT (1-methyl-L-tryptophan). In terms of biological role, catalyzes the first and rate limiting step of the catabolism of the essential amino acid tryptophan along the kynurenine pathway. Involved in immune regulation. May not play a significant role in tryptophan-related tumoral resistance. In Homo sapiens (Human), this protein is Indoleamine 2,3-dioxygenase 2.